Reading from the N-terminus, the 85-residue chain is Beta-insect depressant toxin Lqh-dprIT3a (85 aa).

An N-terminal signal peptide occupies residues 1 to 21; the sequence is MKLLLLLTISASMLIEGLVNA. One can recognise an LCN-type CS-alpha/beta domain in the interval 22–82; that stretch reads DGYIRGGDGC…EWDYETNTCG (61 aa). 4 cysteine pairs are disulfide-bonded: Cys31/Cys81, Cys35/Cys56, Cys42/Cys63, and Cys46/Cys65. Glycine amide is present on Gly82.

Belongs to the long (4 C-C) scorpion toxin superfamily. Sodium channel inhibitor family. Beta subfamily. As to expression, expressed by the venom gland.

It is found in the secreted. Depressant insect beta-toxins cause a transient contraction paralysis followed by a slow flaccid paralysis. They bind voltage-independently at site-4 of sodium channels (Nav) and block action potentials, primarily by depolarizing the axonal membrane and suppressing the sodium current. This depressant toxin is active only on insects. It is found in a relatively small amount in the venom, and its activity on insects is 10-fold higher compared to other known depressant toxins. The chain is Beta-insect depressant toxin Lqh-dprIT3a from Leiurus hebraeus (Hebrew deathstalker scorpion).